We begin with the raw amino-acid sequence, 159 residues long: Transcription elongation factor GreA (159 aa).

Residues Arg5 to Ile77 are a coiled coil.

The protein belongs to the GreA/GreB family.

In terms of biological role, necessary for efficient RNA polymerase transcription elongation past template-encoded arresting sites. The arresting sites in DNA have the property of trapping a certain fraction of elongating RNA polymerases that pass through, resulting in locked ternary complexes. Cleavage of the nascent transcript by cleavage factors such as GreA or GreB allows the resumption of elongation from the new 3'terminus. GreA releases sequences of 2 to 3 nucleotides. The protein is Transcription elongation factor GreA of Alkaliphilus oremlandii (strain OhILAs) (Clostridium oremlandii (strain OhILAs)).